The following is a 108-amino-acid chain: Nucleoid-associated protein Bphy_0952 (108 aa).

A disordered region spans residues Ala-87–Phe-108. Pro residues predominate over residues Pro-99–Phe-108.

Belongs to the YbaB/EbfC family. As to quaternary structure, homodimer.

Its subcellular location is the cytoplasm. The protein localises to the nucleoid. Its function is as follows. Binds to DNA and alters its conformation. May be involved in regulation of gene expression, nucleoid organization and DNA protection. The polypeptide is Nucleoid-associated protein Bphy_0952 (Paraburkholderia phymatum (strain DSM 17167 / CIP 108236 / LMG 21445 / STM815) (Burkholderia phymatum)).